Here is a 205-residue protein sequence, read N- to C-terminus: Dephospho-CoA kinase (205 aa).

In terms of domain architecture, DPCK spans 7-205; the sequence is IIGITGRIAS…QEIINYERFE (199 aa). ATP is bound at residue 15-20; sequence ASGKDA.

It belongs to the CoaE family.

It is found in the cytoplasm. The catalysed reaction is 3'-dephospho-CoA + ATP = ADP + CoA + H(+). Its pathway is cofactor biosynthesis; coenzyme A biosynthesis; CoA from (R)-pantothenate: step 5/5. In terms of biological role, catalyzes the phosphorylation of the 3'-hydroxyl group of dephosphocoenzyme A to form coenzyme A. This is Dephospho-CoA kinase from Borrelia garinii subsp. bavariensis (strain ATCC BAA-2496 / DSM 23469 / PBi) (Borreliella bavariensis).